A 107-amino-acid chain; its full sequence is Anaphase-promoting complex subunit 14 (107 aa).

In terms of assembly, the APC/C is composed of at least 13 subunits: apc1, apc2, nuc2, apc4, apc5, cut9, apc8, apc10, apc11, hcn1, apc13, apc14 and apc15.

Its subcellular location is the ascus epiplasm. Component of the anaphase promoting complex/cyclosome (APC/C), a cell cycle-regulated E3 ubiquitin-protein ligase complex that controls progression through mitosis and the G1 phase of the cell cycle. The APC/C is thought to confer substrate specificity and, in the presence of ubiquitin-conjugating E2 enzymes, it catalyzes the formation of protein-ubiquitin conjugates that are subsequently degraded by the 26S proteasome. Appears to play a role in spore wall formation. This chain is Anaphase-promoting complex subunit 14, found in Schizosaccharomyces pombe (strain 972 / ATCC 24843) (Fission yeast).